Consider the following 612-residue polypeptide: Beta-mannosyltransferase 5 (612 aa).

Over 1–12 (MVQKQYRFAPKS) the chain is Cytoplasmic. Residues 13-33 (IFTFVFLCFVAIVVIISTSSL) traverse the membrane as a helical segment. Over 34-612 (VQVEESLDPI…YRAHLKRWQN (579 aa)) the chain is Extracellular. 3 N-linked (GlcNAc...) asparagine glycosylation sites follow: Asn-224, Asn-230, and Asn-480.

It belongs to the BMT family.

It is found in the membrane. In terms of biological role, beta-mannosyltransferase involved in cell wall biosynthesis. Required for beta-1,2-mannose transfer on phospholipomannan. The sequence is that of Beta-mannosyltransferase 5 (BMT5) from Candida albicans (strain SC5314 / ATCC MYA-2876) (Yeast).